Reading from the N-terminus, the 544-residue chain is Thermosome subunit (544 aa).

Belongs to the TCP-1 chaperonin family. In terms of assembly, forms an oligomeric complex of eight-membered rings.

Functionally, molecular chaperone; binds unfolded polypeptides in vitro, and has a weak ATPase activity. The protein is Thermosome subunit (ths) of Methanothermococcus thermolithotrophicus (Methanococcus thermolithotrophicus).